Here is a 138-residue protein sequence, read N- to C-terminus: ATP synthase epsilon chain, chloroplastic (138 aa).

This sequence belongs to the ATPase epsilon chain family. As to quaternary structure, F-type ATPases have 2 components, CF(1) - the catalytic core - and CF(0) - the membrane proton channel. CF(1) has five subunits: alpha(3), beta(3), gamma(1), delta(1), epsilon(1). CF(0) has three main subunits: a, b and c.

Its subcellular location is the plastid. It localises to the chloroplast thylakoid membrane. Functionally, produces ATP from ADP in the presence of a proton gradient across the membrane. The chain is ATP synthase epsilon chain, chloroplastic from Huperzia lucidula (Shining clubmoss).